Consider the following 316-residue polypeptide: Ribosomal RNA small subunit methyltransferase H (316 aa).

S-adenosyl-L-methionine-binding positions include 35-37 (SGH), aspartate 55, phenylalanine 84, aspartate 105, and glutamine 112.

Belongs to the methyltransferase superfamily. RsmH family.

The protein localises to the cytoplasm. The enzyme catalyses cytidine(1402) in 16S rRNA + S-adenosyl-L-methionine = N(4)-methylcytidine(1402) in 16S rRNA + S-adenosyl-L-homocysteine + H(+). Its function is as follows. Specifically methylates the N4 position of cytidine in position 1402 (C1402) of 16S rRNA. In Streptococcus equi subsp. equi (strain 4047), this protein is Ribosomal RNA small subunit methyltransferase H.